A 139-amino-acid polypeptide reads, in one-letter code: MKPAARRRARECAVQALYSWQLSHNDIADVEYQFLAEQDVKDVDVLYFRELLSGVATNSAYLDGLMKPYLSRQLEELGQVEKAVLRIALFELSKRDDVPYKVAINEAIELAKTFGAEDSHKFVNGVLDKAAPVIRPRKK.

It belongs to the NusB family.

In terms of biological role, involved in transcription antitermination. Required for transcription of ribosomal RNA (rRNA) genes. Binds specifically to the boxA antiterminator sequence of the ribosomal RNA (rrn) operons. The protein is Transcription antitermination protein NusB of Klebsiella pneumoniae (strain 342).